The following is a 150-amino-acid chain: D-aminoacyl-tRNA deacylase (150 aa).

The short motif at 138–139 (GP) is the Gly-cisPro motif, important for rejection of L-amino acids element.

This sequence belongs to the DTD family. As to quaternary structure, homodimer.

The protein resides in the cytoplasm. The catalysed reaction is glycyl-tRNA(Ala) + H2O = tRNA(Ala) + glycine + H(+). It catalyses the reaction a D-aminoacyl-tRNA + H2O = a tRNA + a D-alpha-amino acid + H(+). Functionally, an aminoacyl-tRNA editing enzyme that deacylates mischarged D-aminoacyl-tRNAs. Also deacylates mischarged glycyl-tRNA(Ala), protecting cells against glycine mischarging by AlaRS. Acts via tRNA-based rather than protein-based catalysis; rejects L-amino acids rather than detecting D-amino acids in the active site. By recycling D-aminoacyl-tRNA to D-amino acids and free tRNA molecules, this enzyme counteracts the toxicity associated with the formation of D-aminoacyl-tRNA entities in vivo and helps enforce protein L-homochirality. The chain is D-aminoacyl-tRNA deacylase from Sorangium cellulosum (strain So ce56) (Polyangium cellulosum (strain So ce56)).